We begin with the raw amino-acid sequence, 404 residues long: MHC class I-like protein MILL1 (404 aa).

An N-terminal signal peptide occupies residues 1 to 30 (MMLSRDLRAEAAVRLWIMFLLLEDLLGACA). The interval 59 to 150 (EVAGPHTLRY…VTGQKGQDKG (92 aa)) is alpha-1. N-linked (GlcNAc...) asparagine glycosylation is found at asparagine 98, asparagine 102, and asparagine 165. Residues 151–242 (LHILQATLGC…SLRSEPLDTG (92 aa)) form an alpha-2 region. Disulfide bonds link cysteine 160/cysteine 223 and cysteine 262/cysteine 322. The 115-residue stretch at 224 to 338 (PAQLQRHLAS…GNIEKRAVIV (115 aa)) folds into the Ig-like C1-type domain. Residues 243-342 (SPMVIVTFRN…KRAVIVNTVS (100 aa)) form an alpha-3 region. N-linked (GlcNAc...) asparagine glycosylation is present at asparagine 323. The tract at residues 343-373 (GEKTRQPSTSGVGGRVKKSLWTTMTTAFMVT) is connecting peptide. Serine 374 is lipidated: GPI-anchor amidated serine. Residues 375 to 404 (WTRKTGGDSTLLLLWWLLFFSTVLAVLTLV) constitute a propeptide, removed in mature form.

Belongs to the MHC class I family. In terms of assembly, heterodimer with B2M. As to expression, detected in skin, esophagus, tongue, skin, muscle, uterus, ovary, testis and epididymis.

Its subcellular location is the cell membrane. The protein is MHC class I-like protein MILL1 of Rattus norvegicus (Rat).